Reading from the N-terminus, the 54-residue chain is MCTTLFLLSTLAMLWRRRFANRVQPEPNGVDGAVSGSSLETDLQSSGREKEPLK.

A lipid anchor (S-palmitoyl cysteine) is attached at Cys2. The interval 24–54 (QPEPNGVDGAVSGSSLETDLQSSGREKEPLK) is disordered. The segment covering 35-46 (SGSSLETDLQSS) has biased composition (polar residues).

It belongs to the PRCD family. As to quaternary structure, interacts with RHO/rhodopsin; the interaction promotes PRCD stability. Post-translationally, palmitoylated at Cys-2. Palmitoylation is essential for protein stability and trafficking to the photoreceptor outer segment, but does not appear to be essential for membrane localization. Probably palmitoylated by ZDHHC3. Phosphorylated. As to expression, expressed in retina (at protein level).

It is found in the cell projection. The protein localises to the cilium. It localises to the photoreceptor outer segment. Its subcellular location is the membrane. The protein resides in the endoplasmic reticulum. It is found in the golgi apparatus. Its function is as follows. Involved in vision. In Bos taurus (Bovine), this protein is Photoreceptor disk component PRCD.